A 60-amino-acid polypeptide reads, in one-letter code: Large ribosomal subunit protein bL32 (60 aa).

Positions 1–60 are disordered; that stretch reads MAVQQVKKSRSKRDMRRSHDSLTGPTLSTDKSTGELHLRHHVSPNGFYKGKKVVDTKSED. Basic residues predominate over residues 7–16; that stretch reads KKSRSKRDMR.

Belongs to the bacterial ribosomal protein bL32 family.

This Francisella philomiragia subsp. philomiragia (strain ATCC 25017 / CCUG 19701 / FSC 153 / O#319-036) protein is Large ribosomal subunit protein bL32.